The sequence spans 466 residues: Uronate isomerase (466 aa).

This sequence belongs to the metallo-dependent hydrolases superfamily. Uronate isomerase family.

The enzyme catalyses D-glucuronate = D-fructuronate. It carries out the reaction aldehydo-D-galacturonate = keto-D-tagaturonate. The protein operates within carbohydrate metabolism; pentose and glucuronate interconversion. This is Uronate isomerase from Streptococcus agalactiae serotype V (strain ATCC BAA-611 / 2603 V/R).